The chain runs to 317 residues: Acetyl-coenzyme A carboxylase carboxyl transferase subunit alpha (317 aa).

One can recognise a CoA carboxyltransferase C-terminal domain in the interval 41 to 291 (KVDKLLRSTY…SMALDSALRD (251 aa)).

The protein belongs to the AccA family. In terms of assembly, acetyl-CoA carboxylase is a heterohexamer composed of biotin carboxyl carrier protein (AccB), biotin carboxylase (AccC) and two subunits each of ACCase subunit alpha (AccA) and ACCase subunit beta (AccD).

It localises to the cytoplasm. The catalysed reaction is N(6)-carboxybiotinyl-L-lysyl-[protein] + acetyl-CoA = N(6)-biotinyl-L-lysyl-[protein] + malonyl-CoA. It functions in the pathway lipid metabolism; malonyl-CoA biosynthesis; malonyl-CoA from acetyl-CoA: step 1/1. Component of the acetyl coenzyme A carboxylase (ACC) complex. First, biotin carboxylase catalyzes the carboxylation of biotin on its carrier protein (BCCP) and then the CO(2) group is transferred by the carboxyltransferase to acetyl-CoA to form malonyl-CoA. The protein is Acetyl-coenzyme A carboxylase carboxyl transferase subunit alpha of Paramagnetospirillum magneticum (strain ATCC 700264 / AMB-1) (Magnetospirillum magneticum).